A 479-amino-acid polypeptide reads, in one-letter code: PTS system sucrose-specific EIIBC component (479 aa).

The 84-residue stretch at 4-87 folds into the PTS EIIB type-1 domain; it reads PAVAKELLTL…AKLTGMSEMS (84 aa). The active-site Phosphocysteine intermediate; for EIIB activity is the cysteine 26. 11 helical membrane-spanning segments follow: residues 112–132, 158–178, 182–202, 204–224, 232–252, 264–284, 303–323, 345–365, 376–396, 403–423, and 448–468; these read IFVPIIPAIVAGGLLMGIYNL, MINTFANAPFVYLPILLAFSA, FGGNPYLGAALGMLMVHPDLL, GWGFGGASVSGNIPVWNILGF, QGSVLPVLVSAFILAKVELGL, LTPLLAIFIAGLLTFTVVGPF, AGFVGGAVFGLIYAPFVITGM, FIFPIAAMSNVSQGAAALAVG, IAIPSGVTGLLGITEPAMFGV, PFIAAVCAAALSSAFITMFNV, and IAGMVIAFLTAFVLTIVLGIG. Residues 120–477 enclose the PTS EIIC type-1 domain; sequence IVAGGLLMGI…GDRAKVGKKA (358 aa).

Its subcellular location is the cell inner membrane. It catalyses the reaction N(pros)-phospho-L-histidyl-[protein](out) + sucrose = sucrose 6(G)-phosphate(in) + L-histidyl-[protein]. The phosphoenolpyruvate-dependent sugar phosphotransferase system (sugar PTS), a major carbohydrate active transport system, catalyzes the phosphorylation of incoming sugar substrates concomitantly with their translocation across the cell membrane. This system is involved in sucrose transport. The chain is PTS system sucrose-specific EIIBC component from Vibrio alginolyticus.